Reading from the N-terminus, the 268-residue chain is Orotidine 5'-phosphate decarboxylase (268 aa).

Residues Asp-38, 60 to 62 (KTH), 92 to 101 (DRKFADIGNT), Tyr-218, and Arg-236 contribute to the substrate site. Lys-94 (proton donor) is an active-site residue.

It belongs to the OMP decarboxylase family.

The catalysed reaction is orotidine 5'-phosphate + H(+) = UMP + CO2. Its pathway is pyrimidine metabolism; UMP biosynthesis via de novo pathway; UMP from orotate: step 2/2. The sequence is that of Orotidine 5'-phosphate decarboxylase (URA3) from Candida parapsilosis (Yeast).